The chain runs to 64 residues: Small cysteine-rich protein (64 aa).

Residues 1-17 form the signal peptide; that stretch reads FVCVQARQIDPEQILRT. Positions 18 to 19 are excised as a propeptide; it reads PE.

Contains 4 disulfide bonds.

Its subcellular location is the secreted. It is found in the nematocyst. The protein is Small cysteine-rich protein of Anemonia viridis (Snakelocks anemone).